The sequence spans 865 residues: Protein translocase subunit SecA (865 aa).

ATP-binding positions include glutamine 93, 111–115, and aspartate 501; that span reads GEGKT. Zn(2+) is bound by residues cysteine 841, cysteine 843, cysteine 852, and cysteine 853.

It belongs to the SecA family. In terms of assembly, monomer and homodimer. Part of the essential Sec protein translocation apparatus which comprises SecA, SecYEG and auxiliary proteins SecDF-YajC and YidC. Zn(2+) serves as cofactor.

Its subcellular location is the cell inner membrane. The protein resides in the cytoplasm. The enzyme catalyses ATP + H2O + cellular proteinSide 1 = ADP + phosphate + cellular proteinSide 2.. Its function is as follows. Part of the Sec protein translocase complex. Interacts with the SecYEG preprotein conducting channel. Has a central role in coupling the hydrolysis of ATP to the transfer of proteins into and across the cell membrane, serving as an ATP-driven molecular motor driving the stepwise translocation of polypeptide chains across the membrane. The chain is Protein translocase subunit SecA from Helicobacter pylori (strain G27).